The sequence spans 111 residues: T cell receptor beta variable 29-1 (111 aa).

A signal peptide spans 1–16 (MLSLLLLLLGLGSVFS). The Ig-like domain maps to 17 to 111 (AVISQKPSRD…DSSIYLCSVE (95 aa)). Cysteine 38 and cysteine 108 are joined by a disulfide. Asparagine 87 carries an N-linked (GlcNAc...) asparagine glycan.

In terms of assembly, alpha-beta TR is a heterodimer composed of an alpha and beta chain; disulfide-linked. The alpha-beta TR is associated with the transmembrane signaling CD3 coreceptor proteins to form the TR-CD3 (TcR or TCR). The assembly of alpha-beta TR heterodimers with CD3 occurs in the endoplasmic reticulum where a single alpha-beta TR heterodimer associates with one CD3D-CD3E heterodimer, one CD3G-CD3E heterodimer and one CD247 homodimer forming a stable octameric structure. CD3D-CD3E and CD3G-CD3E heterodimers preferentially associate with TR alpha and TR beta chains, respectively. The association of the CD247 homodimer is the last step of TcR assembly in the endoplasmic reticulum and is required for transport to the cell surface.

It localises to the cell membrane. Its function is as follows. V region of the variable domain of T cell receptor (TR) beta chain that participates in the antigen recognition. Alpha-beta T cell receptors are antigen specific receptors which are essential to the immune response and are present on the cell surface of T lymphocytes. Recognize peptide-major histocompatibility (MH) (pMH) complexes that are displayed by antigen presenting cells (APC), a prerequisite for efficient T cell adaptive immunity against pathogens. Binding of alpha-beta TR to pMH complex initiates TR-CD3 clustering on the cell surface and intracellular activation of LCK that phosphorylates the ITAM motifs of CD3G, CD3D, CD3E and CD247 enabling the recruitment of ZAP70. In turn ZAP70 phosphorylates LAT, which recruits numerous signaling molecules to form the LAT signalosome. The LAT signalosome propagates signal branching to three major signaling pathways, the calcium, the mitogen-activated protein kinase (MAPK) kinase and the nuclear factor NF-kappa-B (NF-kB) pathways, leading to the mobilization of transcription factors that are critical for gene expression and essential for T cell growth and differentiation. The T cell repertoire is generated in the thymus, by V-(D)-J rearrangement. This repertoire is then shaped by intrathymic selection events to generate a peripheral T cell pool of self-MH restricted, non-autoaggressive T cells. Post-thymic interaction of alpha-beta TR with the pMH complexes shapes TR structural and functional avidity. This chain is T cell receptor beta variable 29-1, found in Homo sapiens (Human).